Consider the following 730-residue polypeptide: Catalase-peroxidase 1 (730 aa).

The tryptophyl-tyrosyl-methioninium (Trp-Tyr) (with M-243) cross-link spans 92 to 217 (WHSAGTYRTT…LGAAVMGLIY (126 aa)). Catalysis depends on H93, which acts as the Proton acceptor. Residues 217–243 (YVDPEGPNGNPDPLASAENIRESFGRM) constitute a cross-link (tryptophyl-tyrosyl-methioninium (Tyr-Met) (with W-92)). A heme b-binding site is contributed by H258.

Belongs to the peroxidase family. Peroxidase/catalase subfamily. Homodimer or homotetramer. The cofactor is heme b. In terms of processing, formation of the three residue Trp-Tyr-Met cross-link is important for the catalase, but not the peroxidase activity of the enzyme.

The enzyme catalyses H2O2 + AH2 = A + 2 H2O. It carries out the reaction 2 H2O2 = O2 + 2 H2O. Bifunctional enzyme with both catalase and broad-spectrum peroxidase activity. The sequence is that of Catalase-peroxidase 1 from Haloarcula marismortui (strain ATCC 43049 / DSM 3752 / JCM 8966 / VKM B-1809) (Halobacterium marismortui).